Reading from the N-terminus, the 63-residue chain is Small ribosomal subunit protein bS21 (63 aa).

It belongs to the bacterial ribosomal protein bS21 family.

This Syntrophus aciditrophicus (strain SB) protein is Small ribosomal subunit protein bS21.